The primary structure comprises 279 residues: Energy-coupling factor transporter ATP-binding protein EcfA1 (279 aa).

The 236-residue stretch at 5-240 (IELKKVTFNY…GDELLQLGLD (236 aa)) folds into the ABC transporter domain. ATP is bound at residue 40 to 47 (GHNGSGKS).

This sequence belongs to the ABC transporter superfamily. Energy-coupling factor EcfA family. As to quaternary structure, forms a stable energy-coupling factor (ECF) transporter complex composed of 2 membrane-embedded substrate-binding proteins (S component), 2 ATP-binding proteins (A component) and 2 transmembrane proteins (T component).

The protein localises to the cell membrane. Its function is as follows. ATP-binding (A) component of a common energy-coupling factor (ECF) ABC-transporter complex. Unlike classic ABC transporters this ECF transporter provides the energy necessary to transport a number of different substrates. This Streptococcus pyogenes serotype M12 (strain MGAS2096) protein is Energy-coupling factor transporter ATP-binding protein EcfA1.